Reading from the N-terminus, the 75-residue chain is Putative membrane protein insertion efficiency factor (75 aa).

It belongs to the UPF0161 family.

Its subcellular location is the cell inner membrane. Functionally, could be involved in insertion of integral membrane proteins into the membrane. In Gloeothece citriformis (strain PCC 7424) (Cyanothece sp. (strain PCC 7424)), this protein is Putative membrane protein insertion efficiency factor.